Reading from the N-terminus, the 475-residue chain is MEIOTIC F-BOX protein MOF (475 aa).

Residues 1–58 (MRRERDATQIPENPMEGIPQTAAAAAAAAAAEASEPPRKRARVDGGGGGAGEEEEDRL) form a disordered region. Residues 22–33 (AAAAAAAAAAEA) are compositionally biased toward low complexity. The F-box domain occupies 55 to 91 (EDRLSDLPDCLLEDILAHLGSRQAVQTSVLSRRWRNL).

The protein belongs to the F-box protein family. FBX subfamily. Part of a SCF (SKP1-CUL1-F-box protein) E3 ubiquitin-protein ligase complex. Interacts (via F-box domain) directly with SKP1. In terms of tissue distribution, highly expressed in the stem, leaf and in the anther during meiosis. Weakly expressed in roots and lemma/palea.

Its subcellular location is the nucleus. The protein localises to the chromosome. Its pathway is protein modification; protein ubiquitination. Probable component of a SCF (SKP1-CULLIN-F-box protein) E3 ubiquitin-protein ligase complex and may function through the ubiquitin-mediated protein degradation or signaling pathway. Required for male meiotic prophase I progression. Required for telomere bouquet formation, homologous chromosome pairing and for the formation of the synaptonemal complex (SC), which stabilizes initial chromosomal axial associations and promotes crossover formation. Involved in meiotic DNA double-strand break (DSB) end-processing and repair, and is important in the recruitment of DSB repair proteins to the DSB sites. The sequence is that of MEIOTIC F-BOX protein MOF from Oryza sativa subsp. japonica (Rice).